The chain runs to 241 residues: Probable histone-lysine N-methyltransferase set-23 (241 aa).

Residues 25-85 (QGCDCETQCS…SCRNKVVQNG (61 aa)) form the Pre-SET domain. Residues C27, C29, C33, C39, C41, C64, C68, C70, and C77 each contribute to the Zn(2+) site. An SET domain is found at 88 to 210 (KKLKIFSTSE…VGEELSYDYG (123 aa)). S-adenosyl-L-methionine contacts are provided by residues 98 to 100 (KGD), D138, Y140, R167, and 170 to 171 (NH). 4 residues coordinate Zn(2+): C173, C222, C224, and C229. The Post-SET domain maps to 218–234 (NRKLCLCRSENCRKYLP).

Belongs to the class V-like SAM-binding methyltransferase superfamily. Histone-lysine methyltransferase family. Suvar3-9 subfamily.

Its subcellular location is the nucleus. It is found in the chromosome. It carries out the reaction L-lysyl-[histone] + S-adenosyl-L-methionine = N(6)-methyl-L-lysyl-[histone] + S-adenosyl-L-homocysteine + H(+). Functionally, probable histone methyltransferase required for embryonic development. The polypeptide is Probable histone-lysine N-methyltransferase set-23 (Caenorhabditis briggsae).